A 1394-amino-acid chain; its full sequence is Coiled-coil domain-containing protein 7 (1394 aa).

Positions 308–340 (LLDAEYKQIQRDFELLSEEKLVLENELQKLKDT) form a coiled coil. The disordered stretch occupies residues 345-375 (STNNRTKKAAKTVKKKDKGKSEDSEKKMSSE). Residues 349-362 (RTKKAAKTVKKKDK) are compositionally biased toward basic residues. Over residues 363–375 (GKSEDSEKKMSSE) the composition is skewed to basic and acidic residues. A coiled-coil region spans residues 383–421 (LDQVQKVARLEIENKVLQEQLKQALQEAEKAKHQLNYFL). Disordered regions lie at residues 431 to 617 (EGKT…EVPD), 634 to 806 (EQMK…LEHQ), and 819 to 842 (NEKLPREKRHSTHGEESSENPMLK). The segment covering 437–446 (TMRVGNSQTE) has biased composition (polar residues). Residues 447–462 (VKGEDSKTIPLEKETG) show a composition bias toward basic and acidic residues. The span at 464-473 (SLVSDSGGQK) shows a compositional bias: polar residues. Basic and acidic residues predominate over residues 491-500 (LIEKSSEKKR). 3 stretches are compositionally biased toward polar residues: residues 503–513 (PAISDLSQILK), 521–538 (LESSNEVSVAENQSNKSP), and 546–571 (LTTVSSSKEVQDSLSVGTLAQKNETV). The segment covering 583–600 (ESKKADVSEEQLQKKTEE) has biased composition (basic and acidic residues). Residues 663-679 (SRSQSETKNLEATGNES) are compositionally biased toward polar residues. Over residues 695–707 (QDTKSKTEVEVKK) the composition is skewed to basic and acidic residues. The segment covering 711–721 (FQDNQLNTHNE) has biased composition (polar residues). Basic and acidic residues predominate over residues 722–736 (VPNERLIVEHQESMS). The segment covering 780 to 790 (KEQSTLKGQRI) has biased composition (polar residues). Composition is skewed to basic and acidic residues over residues 791–806 (TTHEEEPGKNLALEHQ) and 830–842 (THGEESSENPMLK).

Functionally, may play a role in tumorigenesis. This chain is Coiled-coil domain-containing protein 7 (CCDC7), found in Macaca fascicularis (Crab-eating macaque).